The primary structure comprises 645 residues: Acetyl-coenzyme A synthetase (645 aa).

Residues 190-193, Thr-309, and Asn-333 each bind CoA; that span reads RGGR. Residues 385–387, 409–414, Asp-498, and Arg-513 each bind ATP; these read GEP and DTWWQT. Residue Ser-521 coordinates CoA. Residue Arg-524 participates in ATP binding. Residues Val-535, His-537, and Val-540 each contribute to the Mg(2+) site. Residue Arg-582 coordinates CoA. Lys-607 carries the N6-acetyllysine modification.

The protein belongs to the ATP-dependent AMP-binding enzyme family. It depends on Mg(2+) as a cofactor. Acetylated. Deacetylation by the SIR2-homolog deacetylase activates the enzyme.

It catalyses the reaction acetate + ATP + CoA = acetyl-CoA + AMP + diphosphate. In terms of biological role, catalyzes the conversion of acetate into acetyl-CoA (AcCoA), an essential intermediate at the junction of anabolic and catabolic pathways. AcsA undergoes a two-step reaction. In the first half reaction, AcsA combines acetate with ATP to form acetyl-adenylate (AcAMP) intermediate. In the second half reaction, it can then transfer the acetyl group from AcAMP to the sulfhydryl group of CoA, forming the product AcCoA. In Beijerinckia indica subsp. indica (strain ATCC 9039 / DSM 1715 / NCIMB 8712), this protein is Acetyl-coenzyme A synthetase.